A 689-amino-acid polypeptide reads, in one-letter code: Glycine--tRNA ligase beta subunit (689 aa).

It belongs to the class-II aminoacyl-tRNA synthetase family. As to quaternary structure, tetramer of two alpha and two beta subunits.

It localises to the cytoplasm. It carries out the reaction tRNA(Gly) + glycine + ATP = glycyl-tRNA(Gly) + AMP + diphosphate. In Shigella dysenteriae serotype 1 (strain Sd197), this protein is Glycine--tRNA ligase beta subunit.